Consider the following 483-residue polypeptide: NADH-quinone oxidoreductase subunit N (483 aa).

13 helical membrane passes run 13–33, 45–65, 80–100, 111–131, 165–185, 205–225, 244–264, 276–296, 301–321, 328–348, 373–393, 407–429, and 452–472; these read PALP…YGVF, GALA…NAYV, FMKL…LTFI, PVLI…NGLI, FVLG…IYGF, IGVI…ISAV, AFFA…VLFV, IIVF…IGQS, LMAY…AAGT, VLIY…CILA, AFMM…AGFF, LYPL…LRIV, and VLGI…PLIL.

The protein belongs to the complex I subunit 2 family. In terms of assembly, NDH-1 is composed of 14 different subunits. Subunits NuoA, H, J, K, L, M, N constitute the membrane sector of the complex.

Its subcellular location is the cell inner membrane. It catalyses the reaction a quinone + NADH + 5 H(+)(in) = a quinol + NAD(+) + 4 H(+)(out). In terms of biological role, NDH-1 shuttles electrons from NADH, via FMN and iron-sulfur (Fe-S) centers, to quinones in the respiratory chain. The immediate electron acceptor for the enzyme in this species is believed to be ubiquinone. Couples the redox reaction to proton translocation (for every two electrons transferred, four hydrogen ions are translocated across the cytoplasmic membrane), and thus conserves the redox energy in a proton gradient. The polypeptide is NADH-quinone oxidoreductase subunit N (Parvibaculum lavamentivorans (strain DS-1 / DSM 13023 / NCIMB 13966)).